Here is a 147-residue protein sequence, read N- to C-terminus: Protein phosphatase 1 regulatory subunit 14A (147 aa).

Basic residues predominate over residues 1–11 (MAAQRLGKRVL). The disordered stretch occupies residues 1 to 37 (MAAQRLGKRVLSKLQSPSRARGPGGSPGGLQKRHARV). S26 bears the Phosphoserine mark. Residues 35 to 120 (ARVTVKYDRR…LLAKLQGLHR (86 aa)) form an inhibitory region. T38 carries the phosphothreonine; by PKC modification. A disordered region spans residues 118–147 (LHRQPGLRQPSPSHDGSLSPLQDRARTAHP). Positions 127–137 (PSPSHDGSLSP) are enriched in polar residues. 3 positions are modified to phosphoserine: S128, S134, and S136.

It belongs to the PP1 inhibitor family. Isoform 1 is detected in aorta and testis. Isoform 2 is detected in aorta.

Its subcellular location is the cytoplasm. Its function is as follows. Inhibitor of PPP1CA. Has over 1000-fold higher inhibitory activity when phosphorylated, creating a molecular switch for regulating the phosphorylation status of PPP1CA substrates and smooth muscle contraction. This Homo sapiens (Human) protein is Protein phosphatase 1 regulatory subunit 14A (PPP1R14A).